The sequence spans 494 residues: Chromosomal replication initiator protein DnaA (494 aa).

Positions 1–103 (MTNIGGPVVE…LRVEVIVRGM (103 aa)) are domain I, interacts with DnaA modulators. Positions 103–148 (MKRVSKGVVCRTSAAPVVLEGQTASSFVESYTEPSVKDIEAGVFGS) are domain II. Positions 149–371 (PLDSRYTFES…GAFNQLLFRQ (223 aa)) are domain III, AAA+ region. The ATP site is built by glycine 195, glycine 197, lysine 198, and threonine 199. The domain IV, binds dsDNA stretch occupies residues 372 to 494 (SFESDLSLER…LKRLIGEQAA (123 aa)).

The protein belongs to the DnaA family. Oligomerizes as a right-handed, spiral filament on DNA at oriC.

It is found in the cytoplasm. Plays an essential role in the initiation and regulation of chromosomal replication. ATP-DnaA binds to the origin of replication (oriC) to initiate formation of the DNA replication initiation complex once per cell cycle. Binds the DnaA box (a 9 base pair repeat at the origin) and separates the double-stranded (ds)DNA. Forms a right-handed helical filament on oriC DNA; dsDNA binds to the exterior of the filament while single-stranded (ss)DNA is stabiized in the filament's interior. The ATP-DnaA-oriC complex binds and stabilizes one strand of the AT-rich DNA unwinding element (DUE), permitting loading of DNA polymerase. After initiation quickly degrades to an ADP-DnaA complex that is not apt for DNA replication. Binds acidic phospholipids. The sequence is that of Chromosomal replication initiator protein DnaA from Bartonella quintana (strain Toulouse) (Rochalimaea quintana).